The chain runs to 612 residues: RNA-binding protein MRN1 (612 aa).

A compositionally biased stretch (low complexity) spans 1–28 (MVVSYNNNNNNNNNNNNNNISNNNNNNN). Disordered regions lie at residues 1-57 (MVVS…TYAS) and 105-125 (PTQFQTKQRNDSQQQRFSQEQ). Polar residues-rich tracts occupy residues 42–57 (YQQSSSSGPYQETYAS) and 115–125 (DSQQQRFSQEQ). 4 RRM domains span residues 201–274 (RTVY…WGKP), 292–379 (RNVY…KTQQ), 431–504 (RTVY…WGKH), and 522–602 (RNVY…FGKD).

Its subcellular location is the cytoplasm. In terms of biological role, RNA-binding protein that binds specific categories of mRNAs, including those that contain upstream open reading frames (uORFs) and internal ribosome entry sites (IRES). Probably involved in translational regulation. This chain is RNA-binding protein MRN1 (MRN1), found in Saccharomyces cerevisiae (strain ATCC 204508 / S288c) (Baker's yeast).